A 317-amino-acid chain; its full sequence is MANTLEQLKSFTTIVADTGDIEAIKRSQPEDATTNPSLILKAAQIPEYSGLIDNAIAWAKTQSDNLETQIEDAADKLAVNIGLEILKLVPGRISTEVDARLSFDKTASIAKAHKLIRLYQEAGIDKSRILIKLASTWEGICAAKELEAEGINCNLTLLFSFAQARACAEAGVFLISPFVGRILDWYKKSTGKDYRASEDPGVVSVTDIYNYYKRHGYKTVVMGASFRNTGEIIELAGCDRLTIGPSLLEEMAASNTPVVRKLTPTTDTVAPGPVMSEAEFRWEMNQDAMAVEKLAEGIRNFAIDQGKLEEMLKAKLA.

The Schiff-base intermediate with substrate role is filled by Lys132.

Belongs to the transaldolase family. Type 1 subfamily. Homodimer.

The protein resides in the cytoplasm. It catalyses the reaction D-sedoheptulose 7-phosphate + D-glyceraldehyde 3-phosphate = D-erythrose 4-phosphate + beta-D-fructose 6-phosphate. Its pathway is carbohydrate degradation; pentose phosphate pathway; D-glyceraldehyde 3-phosphate and beta-D-fructose 6-phosphate from D-ribose 5-phosphate and D-xylulose 5-phosphate (non-oxidative stage): step 2/3. In terms of biological role, transaldolase is important for the balance of metabolites in the pentose-phosphate pathway. In Shewanella amazonensis (strain ATCC BAA-1098 / SB2B), this protein is Transaldolase.